The chain runs to 320 residues: Probable 5-dehydro-4-deoxyglucarate dehydratase (320 aa).

It belongs to the DapA family.

The enzyme catalyses 5-dehydro-4-deoxy-D-glucarate + H(+) = 2,5-dioxopentanoate + CO2 + H2O. The protein operates within carbohydrate acid metabolism; D-glucarate degradation; 2,5-dioxopentanoate from D-glucarate: step 2/2. The protein is Probable 5-dehydro-4-deoxyglucarate dehydratase of Streptomyces griseus subsp. griseus (strain JCM 4626 / CBS 651.72 / NBRC 13350 / KCC S-0626 / ISP 5235).